The primary structure comprises 784 residues: Probable phosphoketolase (784 aa).

It belongs to the XFP family. It depends on thiamine diphosphate as a cofactor.

The protein is Probable phosphoketolase of Rhodopseudomonas palustris (strain BisB5).